A 210-amino-acid chain; its full sequence is Somatotropin-1 (210 aa).

The first 22 residues, M1–A22, serve as a signal peptide directing secretion. H38 contributes to the Zn(2+) binding site. C71 and C183 are disulfide-bonded. E192 provides a ligand contact to Zn(2+). An intrachain disulfide couples C200 to C208.

It belongs to the somatotropin/prolactin family.

It localises to the secreted. Its function is as follows. Growth hormone plays an important role in growth control and is involved in the regulation of several anabolic processes. Implicated as an osmoregulatory substance important for seawater adaptation. This Oncorhynchus nerka (Sockeye salmon) protein is Somatotropin-1 (gh1).